The following is a 97-amino-acid chain: Protein C4 (97 aa).

2 disordered regions span residues 1 to 31 and 75 to 97; these read MGLL…PHTG and ANLP…PSIY. G2 is lipidated: N-myristoyl glycine; by host. Residues 77–88 show a composition bias toward polar residues; the sequence is LPTTHMPRQSIQ.

The protein belongs to the geminiviridae protein AC4/C4 family.

It is found in the host cell membrane. Pathogenicity determinant. May act as a suppressor of RNA-mediated gene silencing, also known as post-transcriptional gene silencing (PTGS), a mechanism of plant viral defense that limits the accumulation of viral RNAs. This Tomato yellow leaf curl China virus (TYLCCNV) protein is Protein C4.